Reading from the N-terminus, the 3183-residue chain is WD repeat- and FYVE domain-containing protein 4 (3183 aa).

A compositionally biased stretch (basic and acidic residues) spans 1–15; the sequence is MEAEDLSKTEDRPED. Disordered regions lie at residues 1 to 37, 790 to 811, 938 to 977, and 1828 to 1852; these read MEAEDLSKTEDRPEDPGFQNEGQSPAVKPSFSLEGQS, AGQEPSVDAQKAEAGGRQGKFK, KSLHLPPGHEDNPGCSGSCAATAEKPTDSSPRPGGSQALR, and KETTSESSRNTSSPGASAEASHAAE. Residues 1832–1852 are compositionally biased toward low complexity; that stretch reads SESSRNTSSPGASAEASHAAE. A BEACH-type PH domain is found at 2383-2508; the sequence is LDGEKVSQKV…DRSKALKSFS (126 aa). Residues 2525 to 2819 enclose the BEACH domain; the sequence is NLRKHPGFDR…QIFTKPHPSR (295 aa). The segment at 2812–2836 is disordered; the sequence is FTKPHPSRNTTGKNPGPGKDASTPV. WD repeat units lie at residues 2930-2969, 2979-3018, 3021-3060, 3070-3108, and 3150-3183; these read LAAWGPCLCAVCPSPTMIVTSGASAVVCIWELSLVKGRPR, GHTQAVTCLTASVTFSLLVSGSQDRTCILWDLDHLSRVAC, VHREGISAIAISDVSGTIVSCAGAHLSLWNVNGQPLASIT, TCCCIVEGPAWDASHVIITGSKDGMVRIWKTEDVKMPVP, and KASPAVTALAITRNQSKLLVGDEKGRIFCWSADG.

Interacts with HSP90AB1. As to expression, highly expressed in immune tissues, especially B lymphocytes.

It is found in the early endosome. The protein localises to the endoplasmic reticulum. Plays a critical role in the regulation of cDC1-mediated cross-presentation of viral and tumor antigens in dendritic cells. Mechanistically, acts near the plasma membrane and interacts with endosomal membranes to promote endosomal-to-cytosol antigen trafficking. Also plays a role in B-cell survival through regulation of autophagy. This is WD repeat- and FYVE domain-containing protein 4 from Mus musculus (Mouse).